The following is a 304-amino-acid chain: Aspartate carbamoyltransferase catalytic subunit (304 aa).

Residues Arg-55 and Thr-56 each contribute to the carbamoyl phosphate site. Lys-83 is an L-aspartate binding site. Carbamoyl phosphate-binding residues include Arg-105, His-133, and Gln-136. Residues Arg-166 and Arg-220 each coordinate L-aspartate. Carbamoyl phosphate is bound by residues Gly-261 and Pro-262.

This sequence belongs to the aspartate/ornithine carbamoyltransferase superfamily. ATCase family. In terms of assembly, heterododecamer (2C3:3R2) of six catalytic PyrB chains organized as two trimers (C3), and six regulatory PyrI chains organized as three dimers (R2).

It catalyses the reaction carbamoyl phosphate + L-aspartate = N-carbamoyl-L-aspartate + phosphate + H(+). It participates in pyrimidine metabolism; UMP biosynthesis via de novo pathway; (S)-dihydroorotate from bicarbonate: step 2/3. Functionally, catalyzes the condensation of carbamoyl phosphate and aspartate to form carbamoyl aspartate and inorganic phosphate, the committed step in the de novo pyrimidine nucleotide biosynthesis pathway. This is Aspartate carbamoyltransferase catalytic subunit from Caldanaerobacter subterraneus subsp. tengcongensis (strain DSM 15242 / JCM 11007 / NBRC 100824 / MB4) (Thermoanaerobacter tengcongensis).